We begin with the raw amino-acid sequence, 342 residues long: Cathepsin B-like cysteine proteinase 2 (342 aa).

The N-terminal stretch at 1-18 (MKYLVLALCTYLCSQSGA) is a signal peptide. Positions 19–86 (DENAAQGIPL…VKEDPDPEVD (68 aa)) are cleaved as a propeptide — activation peptide. The N-linked (GlcNAc...) asparagine glycan is linked to N99. 6 disulfides stabilise this stretch: C100–C128, C111–C156, C147–C214, C148–C152, C185–C218, and C193–C205. The active site involves C114. N138 carries an N-linked (GlcNAc...) asparagine glycan. An N-linked (GlcNAc...) asparagine glycan is attached at N198. The active site involves H285. N296 is a glycosylation site (N-linked (GlcNAc...) asparagine). N305 is an active-site residue.

It belongs to the peptidase C1 family.

Its function is as follows. Expression of the protease correlates with blood-feeding and suggests a role for the protease in blood digestion. The protein is Cathepsin B-like cysteine proteinase 2 (AC-2) of Haemonchus contortus (Barber pole worm).